Consider the following 940-residue polypeptide: Chordin (940 aa).

Residues 1 to 19 (MMEGLLWILLSVIIASVHG) form the signal peptide. The VWFC 1 domain occupies 42 to 118 (SGCSFGGRFY…LPGHCCKTCP (77 aa)). CHRD domains follow at residues 162–277 (TTTD…KHRA), 279–398 (FAET…GRRS), 404–519 (SVLS…LLPY), and 525–652 (RRNE…VPNH). 2 N-linked (GlcNAc...) asparagine glycosylation sites follow: Asn-347 and Asn-430. VWFC domains lie at 689–748 (HSCF…PICE), 767–836 (EGCY…KECP), and 855–919 (RLCK…PECI).

This sequence belongs to the chordin family. As to quaternary structure, interacts with twsg1 and/or bmp4. Cleaved by tolloid proteases; cleavage participates in dorsoventral patterning during early development.

Its subcellular location is the secreted. In terms of biological role, dorsalizing factor. Key developmental protein that dorsalizes early vertebrate embryonic tissues by binding to ventralizing TGF-beta family bone morphogenetic proteins (BMPs) and sequestering them in latent complexes. This chain is Chordin (chd), found in Danio rerio (Zebrafish).